The following is a 106-amino-acid chain: Large ribosomal subunit protein uL24 (106 aa).

The protein belongs to the universal ribosomal protein uL24 family. In terms of assembly, part of the 50S ribosomal subunit.

One of two assembly initiator proteins, it binds directly to the 5'-end of the 23S rRNA, where it nucleates assembly of the 50S subunit. Its function is as follows. One of the proteins that surrounds the polypeptide exit tunnel on the outside of the subunit. This is Large ribosomal subunit protein uL24 from Bordetella bronchiseptica (strain ATCC BAA-588 / NCTC 13252 / RB50) (Alcaligenes bronchisepticus).